The primary structure comprises 254 residues: MRVGIALSGDVPGAAERVLEAVERADVDVVVYHNVELDADVEEVRAKDPGRALVEDLVEGRLDAAVRGAVSGRCVRELVDALDLPFTGRSTVLEAEGRRVLLAPVGIDEGWEVESLVKLGELAARFHRRLTRREPSVAVVSSGRLEDFGRRSEIDRWLADGELVARLLKERGMEVEHVGILVEEALERDVVLFVNGVLGNLTFRCLSLVAGFRSHGAPVLAALERGVVFVDTSRAQRASGYARALRLAAELAGG.

The protein belongs to the MtxX family.

This is an uncharacterized protein from Methanopyrus kandleri (strain AV19 / DSM 6324 / JCM 9639 / NBRC 100938).